Here is a 178-residue protein sequence, read N- to C-terminus: Fimbrial adapter PapK (178 aa).

A signal peptide spans 1–21 (MIKSTGALLLFAALSAGQAIA).

It is found in the secreted. The protein localises to the fimbrium. Adapter that links the pilus rod to the base of the tip fibrillum. Regulates the length of the tip fibrillum and joins it to the pilus rod. Pili are polar filaments radiating from the surface of the bacterium to a length of 0.5-1.5 micrometers and numbering 100-300 per cell, and enable bacteria to colonize the epithelium of specific host organs. The protein is Fimbrial adapter PapK (papK) of Escherichia coli O6:H1 (strain CFT073 / ATCC 700928 / UPEC).